A 537-amino-acid chain; its full sequence is Atrial natriuretic peptide receptor 3 (537 aa).

An N-terminal signal peptide occupies residues 1-20; sequence MPSLLVLTFSACVLLGWALL. Residues 21 to 41 constitute a propeptide that is removed on maturation; sequence ADCTGGGGSGGAGPGRGRRER. At 42–477 the chain is on the extracellular side; sequence EALPPQKIEV…PCKASGGLEE (436 aa). Asn82 is a glycosylation site (N-linked (GlcNAc...) asparagine). 2 disulfides stabilise this stretch: Cys104–Cys132 and Cys209–Cys257. Residues Asn289 and Asn390 are each glycosylated (N-linked (GlcNAc...) asparagine). A helical membrane pass occupies residues 478-500; it reads SAVTGIVVGALLGAGLLMAFYFF. Residues 501 to 537 lie on the Cytoplasmic side of the membrane; the sequence is RKKYRITIERRNQQEESNVGKHRELREDSIRSHFSVA.

This sequence belongs to the ANF receptor family. Homodimer; disulfide-linked. Interacts with OSTN.

The protein resides in the cell membrane. In terms of biological role, receptor for the natriuretic peptide hormones, binding with similar affinities atrial natriuretic peptide NPPA/ANP, brain natriuretic peptide NPPB/BNP, and C-type natriuretic peptide NPPC/CNP. May function as a clearance receptor for NPPA, NPPB and NPPC, regulating their local concentrations and effects. Acts as a regulator of osteoblast differentiation and bone growth by binding to its ligand osteocrin, thereby preventing binding between NPR3/NPR-C and natriuretic peptides, leading to increase cGMP production. This Bos taurus (Bovine) protein is Atrial natriuretic peptide receptor 3 (NPR3).